Consider the following 291-residue polypeptide: Basic helix-loop-helix protein 80 (291 aa).

Residues 65-120 form a disordered region; it reads SAVLDTSPSVDRKRKAAEDSAHSKDSCKDGKSRRGKKASKEVEEKSTTEDEPPKGY. Residues 80–117 show a composition bias toward basic and acidic residues; the sequence is AAEDSAHSKDSCKDGKSRRGKKASKEVEEKSTTEDEPP. The Nuclear localization signal motif lies at 125-132; that stretch reads ARRGQATD. Residues 129-142 form a basic motif; degenerate region; that stretch reads QATDSHSLAERVRR. Positions 129–179 constitute a bHLH domain; the sequence is QATDSHSLAERVRRERISERMRMLQALVPGCDKVTGKALILDEIINYVQSL. The tract at residues 143 to 179 is helix-loop-helix motif; that stretch reads ERISERMRMLQALVPGCDKVTGKALILDEIINYVQSL.

The protein belongs to the bHLH protein family. Homodimer. Interacts with IBH1, BC1 and LO9-177.

The protein localises to the nucleus. In terms of biological role, together with BCL2, positive regulator of cell elongation at least partially through increased gibberellic acid (GA) biosynthesis. The sequence is that of Basic helix-loop-helix protein 80 from Oryza sativa subsp. indica (Rice).